The chain runs to 159 residues: 16 kDa outer membrane lipoprotein (159 aa).

Residues 1–21 (MNKKIFTLFLVVAASAIFAVS) form the signal peptide. Cys22 carries N-palmitoyl cysteine lipidation. Residue Cys22 is the site of S-diacylglycerol cysteine attachment.

Its subcellular location is the cell outer membrane. This is 16 kDa outer membrane lipoprotein (smpA) from Brachyspira hyodysenteriae (Treponema hyodysenteriae).